The sequence spans 295 residues: Protoheme IX farnesyltransferase 2 (295 aa).

9 helical membrane passes run 9–29 (ITKP…FFLA), 36–56 (LAIF…GCVF), 85–105 (VALV…YYVA), 108–128 (LAAL…SLYL), 135–155 (GTLV…VAVS), 163–183 (LTLL…IAIF), 209–229 (ILLY…SGYA), 230–250 (GMSY…MAWT), and 263–283 (KLFV…SVDF).

The protein belongs to the UbiA prenyltransferase family. Protoheme IX farnesyltransferase subfamily.

It is found in the cell inner membrane. It catalyses the reaction heme b + (2E,6E)-farnesyl diphosphate + H2O = Fe(II)-heme o + diphosphate. It functions in the pathway porphyrin-containing compound metabolism; heme O biosynthesis; heme O from protoheme: step 1/1. In terms of biological role, converts heme B (protoheme IX) to heme O by substitution of the vinyl group on carbon 2 of heme B porphyrin ring with a hydroxyethyl farnesyl side group. The sequence is that of Protoheme IX farnesyltransferase 2 from Pseudomonas fluorescens (strain ATCC BAA-477 / NRRL B-23932 / Pf-5).